Consider the following 301-residue polypeptide: uncharacterized protein (301 aa).

2 disordered regions span residues 56 to 126 (ESPT…ESDL) and 149 to 173 (LSTE…DASS). Over residues 71-82 (VQKENQKPKDLN) the composition is skewed to basic and acidic residues. Positions 93–102 (KNSSGLVSQI) are enriched in polar residues. Positions 161-173 (SNTSSSSMSDASS) are enriched in low complexity.

This is an uncharacterized protein from Caenorhabditis elegans.